The chain runs to 426 residues: Ubiquitin carboxyl-terminal hydrolase 46 (426 aa).

Gly2 carries N-myristoyl glycine lipidation. The USP domain occupies 27-406 (YGLVNFGNTC…SAYILFYQAR (380 aa)). Residue Cys36 is the Nucleophile of the active site. The tract at residues 162–181 (TAGLPRSDEKGTSERNGGIT) is disordered. Residue His342 is the Proton acceptor of the active site.

The protein belongs to the peptidase C19 family. Interacts with wdr-20 and wdr-48; the catalytic activity of usp-46 is increased in the presence of both wdr-20 and wdr-48. Interacts with glr-1; the interaction results in deubiquitination of glr-1. As to expression, expressed in a number of tissues including the nervous system, pharynx, body wall muscle, vulva muscle and intestine and is detected in many head and ventral cord neurons.

Its subcellular location is the perikaryon. The protein localises to the cytoplasm. It carries out the reaction Thiol-dependent hydrolysis of ester, thioester, amide, peptide and isopeptide bonds formed by the C-terminal Gly of ubiquitin (a 76-residue protein attached to proteins as an intracellular targeting signal).. Its function is as follows. Regulates the abundance of the glr-1 glutamate receptor in the ventral nerve cord by promoting its deubiquitination and preventing its degradation in the lysosome. Contributes to the regulation of embryonic polarity. This is Ubiquitin carboxyl-terminal hydrolase 46 (usp-46) from Caenorhabditis elegans.